Reading from the N-terminus, the 285-residue chain is RING finger protein 223 (285 aa).

The RING-type zinc-finger motif lies at 81 to 132 (CSICFSGYDNIFKTPKELSCSHVFCLECLARLAAAQPAGRSGREAVPCPFCR). A helical membrane pass occupies residues 230–250 (VALVSVLLLVLFCVILWPVQC).

Its subcellular location is the membrane. This is RING finger protein 223 (Rnf223) from Mus musculus (Mouse).